The sequence spans 554 residues: Valerianol synthase TPS1B (554 aa).

Mg(2+)-binding residues include Asp-307 and Asp-311. A DDXXD motif motif is present at residues 326–330; it reads VQRWD. Mg(2+)-binding residues include Asp-452, Ser-456, and Glu-460.

It belongs to the terpene synthase family. Mg(2+) serves as cofactor.

It carries out the reaction (2E,6E)-farnesyl diphosphate + H2O = valerianol + diphosphate. It functions in the pathway secondary metabolite biosynthesis; terpenoid biosynthesis. Functionally, terpene synthase that catalyzes the biosynthesis of the terpene valerianol, which is a volatile compound of floral scent. The sequence is that of Valerianol synthase TPS1B from Camellia hiemalis (Camellia).